A 144-amino-acid chain; its full sequence is Deoxyuridine 5'-triphosphate nucleotidohydrolase (144 aa).

Residues 63–65, Asn76, and 80–82 contribute to the substrate site; these read RSG and TVD.

It belongs to the dUTPase family. It depends on Mg(2+) as a cofactor.

It catalyses the reaction dUTP + H2O = dUMP + diphosphate + H(+). It functions in the pathway pyrimidine metabolism; dUMP biosynthesis; dUMP from dCTP (dUTP route): step 2/2. Its function is as follows. This enzyme is involved in nucleotide metabolism: it produces dUMP, the immediate precursor of thymidine nucleotides and it decreases the intracellular concentration of dUTP so that uracil cannot be incorporated into DNA. This is Deoxyuridine 5'-triphosphate nucleotidohydrolase from Treponema denticola (strain ATCC 35405 / DSM 14222 / CIP 103919 / JCM 8153 / KCTC 15104).